The sequence spans 254 residues: 3-deoxy-manno-octulosonate cytidylyltransferase (254 aa).

This sequence belongs to the KdsB family.

Its subcellular location is the cytoplasm. It catalyses the reaction 3-deoxy-alpha-D-manno-oct-2-ulosonate + CTP = CMP-3-deoxy-beta-D-manno-octulosonate + diphosphate. It participates in nucleotide-sugar biosynthesis; CMP-3-deoxy-D-manno-octulosonate biosynthesis; CMP-3-deoxy-D-manno-octulosonate from 3-deoxy-D-manno-octulosonate and CTP: step 1/1. The protein operates within bacterial outer membrane biogenesis; lipopolysaccharide biosynthesis. Its function is as follows. Activates KDO (a required 8-carbon sugar) for incorporation into bacterial lipopolysaccharide in Gram-negative bacteria. The polypeptide is 3-deoxy-manno-octulosonate cytidylyltransferase (Haemophilus influenzae (strain ATCC 51907 / DSM 11121 / KW20 / Rd)).